The chain runs to 81 residues: Toxin MIT1 (81 aa).

5 cysteine pairs are disulfide-bonded: cysteine 7/cysteine 19, cysteine 13/cysteine 31, cysteine 18/cysteine 59, cysteine 41/cysteine 67, and cysteine 61/cysteine 77.

The protein belongs to the AVIT (prokineticin) family. As to expression, expressed by the venom gland.

It localises to the secreted. In terms of biological role, potent agonist for both PKR1/PROKR1 and PKR2/PROKR2. Potently contracts gastrointestinal (GI) smooth muscle. This chain is Toxin MIT1, found in Dendroaspis polylepis polylepis (Black mamba).